A 366-amino-acid polypeptide reads, in one-letter code: Ribosomal RNA large subunit methyltransferase M (366 aa).

Residues Ser-188, 221–224, Asp-240, Asp-260, and Asp-277 each bind S-adenosyl-L-methionine; that span reads CPGG. The active-site Proton acceptor is the Lys-306.

It belongs to the class I-like SAM-binding methyltransferase superfamily. RNA methyltransferase RlmE family. RlmM subfamily. As to quaternary structure, monomer.

Its subcellular location is the cytoplasm. It catalyses the reaction cytidine(2498) in 23S rRNA + S-adenosyl-L-methionine = 2'-O-methylcytidine(2498) in 23S rRNA + S-adenosyl-L-homocysteine + H(+). In terms of biological role, catalyzes the 2'-O-methylation at nucleotide C2498 in 23S rRNA. This Sodalis glossinidius (strain morsitans) protein is Ribosomal RNA large subunit methyltransferase M.